Here is a 147-residue protein sequence, read N- to C-terminus: Deoxyuridine 5'-triphosphate nucleotidohydrolase (147 aa).

A Mg(2+)-binding site is contributed by Arg-24. Residues 68-70 (PRS), 82-85 (GVID), Tyr-88, Gly-93, Ile-95, and Arg-111 each bind dUTP.

The protein belongs to the dUTPase family. Requires Mg(2+) as cofactor.

It catalyses the reaction dUTP + H2O = dUMP + diphosphate + H(+). Its function is as follows. This enzyme is involved in nucleotide metabolism: it produces dUMP, the immediate precursor of thymidine nucleotides and it decreases the intracellular concentration of dUTP so that uracil cannot be incorporated into DNA. The chain is Deoxyuridine 5'-triphosphate nucleotidohydrolase (OPG046) from Oryctolagus cuniculus (Rabbit).